The chain runs to 107 residues: Flagellar transcriptional regulator FlhD (107 aa).

The protein belongs to the FlhD family. In terms of assembly, homodimer; disulfide-linked. Forms a heterohexamer composed of two FlhC and four FlhD subunits. Each FlhC binds a FlhD dimer, forming a heterotrimer, and a hexamer assembles by dimerization of two heterotrimers.

Its subcellular location is the cytoplasm. Functions in complex with FlhC as a master transcriptional regulator that regulates transcription of several flagellar and non-flagellar operons by binding to their promoter region. Activates expression of class 2 flagellar genes, including fliA, which is a flagellum-specific sigma factor that turns on the class 3 genes. Also regulates genes whose products function in a variety of physiological pathways. The polypeptide is Flagellar transcriptional regulator FlhD (Bordetella bronchiseptica (strain ATCC BAA-588 / NCTC 13252 / RB50) (Alcaligenes bronchisepticus)).